A 295-amino-acid polypeptide reads, in one-letter code: Putative clathrin assembly protein At5g65370 (295 aa).

An ENTH domain is found at 26–169 (CSSVNAKTID…SIAEVLGITP (144 aa)).

The protein resides in the membrane. It is found in the clathrin-coated pit. The protein localises to the golgi apparatus. It localises to the cytoplasmic vesicle. Its subcellular location is the clathrin-coated vesicle. The protein is Putative clathrin assembly protein At5g65370 of Arabidopsis thaliana (Mouse-ear cress).